The chain runs to 1538 residues: Phenolphthiocerol/phthiocerol polyketide synthase subunit B (1538 aa).

Residues 33–455 (AEPVAVVGIG…GTNAHVIIEQ (423 aa)) enclose the Ketosynthase family 3 (KS3) domain. Catalysis depends on for beta-ketoacyl synthase activity residues C205, H340, and H377. The interval 553–882 (DGSPGPGTVF…TNLYTADIAH (330 aa)) is acyltransferase. Catalysis depends on S649, which acts as the For malonyltransferase activity. NADP(+) is bound at residue 1153-1196 (SQLVIGATGNIGPHLIRQLARMGAKTIVAMARKPGALDELTQCL). The beta-ketoacyl reductase stretch occupies residues 1153 to 1328 (SQLVIGATGN…TVVDWGLWKS (176 aa)). The Carrier domain maps to 1423 to 1498 (DMLFDHVGAL…SLTDYLATVL (76 aa)). At S1458 the chain carries O-(pantetheine 4'-phosphoryl)serine.

NADP(+) serves as cofactor. It depends on pantetheine 4'-phosphate as a cofactor.

The catalysed reaction is icosanoyl-[(phenol)carboxyphthiodiolenone synthase] + 2 (S)-methylmalonyl-CoA + 3 malonyl-CoA + 5 NADPH + 10 H(+) = C32-carboxyphthiodiolenone-[(phenol)carboxyphthiodiolenone synthase] + 5 CO2 + 5 NADP(+) + 5 CoA + 2 H2O. The enzyme catalyses docosanoyl-[(phenol)carboxyphthiodiolenone synthase] + 2 (S)-methylmalonyl-CoA + 3 malonyl-CoA + 5 NADPH + 10 H(+) = C34-carboxyphthiodiolenone-[(phenol)carboxyphthiodiolenone synthase] + 5 CO2 + 5 NADP(+) + 5 CoA + 2 H2O. It carries out the reaction 17-(4-hydroxyphenyl)heptadecanoyl-[(phenol)carboxyphthiodiolenone synthase] + 2 (S)-methylmalonyl-CoA + 3 malonyl-CoA + 5 NADPH + 10 H(+) = C35-(phenol)carboxyphthiodiolenone-[(phenol)carboxyphthiodiolenone synthase] + 5 CO2 + 5 NADP(+) + 5 CoA + 2 H2O. It catalyses the reaction 19-(4-hydroxyphenyl)nonadecanoyl-[(phenol)carboxyphthiodiolenone synthase] + 2 (S)-methylmalonyl-CoA + 3 malonyl-CoA + 5 NADPH + 10 H(+) = C37-(phenol)carboxyphthiodiolenone-[(phenol)carboxyphthiodiolenone synthase] + 5 CO2 + 5 NADP(+) + 5 CoA + 2 H2O. It functions in the pathway lipid metabolism; fatty acid biosynthesis. Functionally, part of the PpsABCDE complex involved in the biosynthesis of the lipid core common to phthiocerols and phenolphthiocerols by successive additions of malonyl-CoA or methylmalonyl-CoA extender units. PpsA can accept as substrate the activated forms of either icosanoyl (C20), docosanoyl (C22) or lignoceroyl (C24) groups from FadD26, or a (4-hydroxyphenyl)-C17 or (4-hydroxyphenyl)-C19 fatty acyl from FadD29. PpsA initiates the biosynthesis and extends its substrate using a malonyl-CoA extender unit. The PpsB and PpsC proteins add the second and third malonyl-CoA extender units. PpsD adds an (R)-methylmalonyl unit and PpsE adds a second (R)-methylmalonyl unit. The incorporation of the methylmalonyl units results in formation of two branched methyl groups in the elongated product. This chain is Phenolphthiocerol/phthiocerol polyketide synthase subunit B (ppsB), found in Mycobacterium tuberculosis (strain CDC 1551 / Oshkosh).